The sequence spans 1025 residues: Serine/threonine-protein kinase TAO2 (1025 aa).

One can recognise a Protein kinase domain in the interval F28 to L281. Residues I34 to V42 and K57 each bind ATP. D151 acts as the Proton acceptor in catalysis. Low complexity predominate over residues E349 to D373. The segment at E349–D377 is disordered. 2 coiled-coil regions span residues S457 to M650 and I755 to A876. Disordered stretches follow at residues F899–G930 and S945–S1025. Residues A905–P914 are compositionally biased toward pro residues. The span at S947 to L986 shows a compositional bias: low complexity. Polar residues predominate over residues S1007–S1025.

The protein belongs to the protein kinase superfamily. STE Ser/Thr protein kinase family. STE20 subfamily. It depends on Mg(2+) as a cofactor.

The catalysed reaction is L-seryl-[protein] + ATP = O-phospho-L-seryl-[protein] + ADP + H(+). The enzyme catalyses L-threonyl-[protein] + ATP = O-phospho-L-threonyl-[protein] + ADP + H(+). Serine/threonine-protein kinase involved in different processes such as apoptotic morphological changes, MAPK8/JNK and MAPK14/p38 MAPK signaling pathway. Functionally, activates the JNK MAP kinase pathway. This Xenopus laevis (African clawed frog) protein is Serine/threonine-protein kinase TAO2 (taok2).